The following is a 589-amino-acid chain: Muscarinic acetylcholine receptor M3 (589 aa).

Residues 1–66 (MTLHSNSTTS…DPLGGHTIWQ (66 aa)) lie on the Extracellular side of the membrane. 5 N-linked (GlcNAc...) asparagine glycosylation sites follow: Asn-6, Asn-15, Asn-41, Asn-48, and Asn-52. The chain crosses the membrane as a helical span at residues 67–90 (VVFIAFLTGFLALVTIIGNILVIV). At 91–103 (AFKVNKQLKTVNN) the chain is on the cytoplasmic side. Residues 104–129 (YFLLSLACADLIIGVISMNLFTTYII) traverse the membrane as a helical segment. Residues 130–141 (MNRWALGNLACD) are Extracellular-facing. Cysteines 140 and 220 form a disulfide. Residues 142 to 163 (LWLSIDYVASNASVMNLLVISF) traverse the membrane as a helical segment. Over 164-183 (DRYFSITRPLTYRAKRTTKR) the chain is Cytoplasmic. A helical transmembrane segment spans residues 184-205 (AGVMIGLAWVISFVLWAPAILF). Topologically, residues 206 to 228 (WQYFVGKRTVPPGECFIQFLSEP) are extracellular. A helical transmembrane segment spans residues 229-251 (TITFGTAIAAFYMPVTIMTILYW). Residues 252–490 (RIYKETEKRT…SLIKEKKAAQ (239 aa)) are Cytoplasmic-facing. The Basolateral sorting signal motif lies at 274-280 (AEAENFV). Disordered regions lie at residues 275–295 (EAENFVHPTGSSRSCSSYELQ) and 323–356 (AEQMDQDHSSSDSWNNNDAAASLENSASSDEEDI). Over residues 283 to 295 (TGSSRSCSSYELQ) the composition is skewed to polar residues. Over residues 333–344 (SDSWNNNDAAAS) the composition is skewed to low complexity. Ser-384 is subject to Phosphoserine. A helical membrane pass occupies residues 491-513 (TLSAILLAFIITWTPYNIMVLVN). At 514-525 (TFCDSCIPKTYW) the chain is on the extracellular side. Cys-516 and Cys-519 are oxidised to a cystine. A helical transmembrane segment spans residues 526–545 (NLGYWLCYINSTVNPVCYAL). The Cytoplasmic segment spans residues 546–589 (CNKTFRTTFKMLLLCQCDKRKRRKQQYQQRQSVIFHKRVPEQAL).

It belongs to the G-protein coupled receptor 1 family. Muscarinic acetylcholine receptor subfamily. CHRM3 sub-subfamily. In terms of assembly, homodimer; the dimers can form tetramers. Interacts with NALCN. Interacts with TMEM147. As to expression, expressed in cerebral cortex, submandibular gland, hypothalamus, pancreas, liver, and ileum.

The protein resides in the cell membrane. It localises to the postsynaptic cell membrane. The protein localises to the basolateral cell membrane. It is found in the endoplasmic reticulum membrane. The muscarinic acetylcholine receptor mediates various cellular responses, including inhibition of adenylate cyclase, breakdown of phosphoinositides and modulation of potassium channels through the action of G proteins. Primary transducing effect is Pi turnover. The polypeptide is Muscarinic acetylcholine receptor M3 (Chrm3) (Mus musculus (Mouse)).